We begin with the raw amino-acid sequence, 440 residues long: C-terminal-binding protein 1 (440 aa).

NAD(+)-binding positions include serine 100, 180–185, aspartate 204, 237–243, 264–266, and aspartate 290; these read IGLGRV, CGLNEHN, and TAR. Residue arginine 266 is part of the active site. Glutamate 295 is a catalytic residue. Histidine 315 acts as the Proton donor in catalysis. Residue 315-318 participates in NAD(+) binding; it reads HAAW. Residues 409–440 are disordered; that stretch reads HAHPAVAHPPHAPSPGQTIKPEADRDHPSDQL. Basic and acidic residues predominate over residues 429-440; it reads PEADRDHPSDQL.

It belongs to the D-isomer specific 2-hydroxyacid dehydrogenase family. Requires NAD(+) as cofactor.

Its subcellular location is the nucleus. Corepressor targeting diverse transcription regulators. Has dehydrogenase activity. The polypeptide is C-terminal-binding protein 1 (ctbp1) (Xenopus laevis (African clawed frog)).